The primary structure comprises 505 residues: MITNDLIAQHSLTLTIASSVLLVFLLSRLLRKDATGKAQGCRPVAKRWQWDPILGLDIVLAQIGALKGNYYLPWLIELHSNMPKTFEINFFGKRQIYTSEPDNLKAMTATNFHDFGIEPMRRHTKGSMPFADKGISTVDGKEWEFSRFLLKPFFYREVYTSTDRIEPFADHMMALIPGDGESFNMQSLIQRWFLDLTTNFIFGKPMDALENPDRARITWAMLDVLKGGRLRAQFYMMMWAFNWTWWYKAVAEVHDFINVHIRETYKEIEEREQRIKDGKPVEPERTDLIWYMAWNLRDEELLRSQLCLVFVPNNDTTSIFISNCIWHLARHPEAWEKLRQEVLAHGDAPLTFEALRNMKYLQCVLNETHRLTPNNVTQIRVCLNDSVLPVGGGKNAKEPFFVRKGDVVSITKTVMYRDPEIWGNDAEEFKPERFDGRRVFWEFLPFGGGPRRCPAQMMVQTEAAYMLARLARVYRRIEARDPAPYTAVMRIGPSNKTGVQIAVYK.

The chain crosses the membrane as a helical span at residues 6-26 (LIAQHSLTLTIASSVLLVFLL). Cys453 is a binding site for heme.

The protein belongs to the cytochrome P450 family. Heme is required as a cofactor.

The protein resides in the membrane. The catalysed reaction is (3E,5S)-3-[(2E,4E,8S,10E,12Z)-1-hydroxy-4,8-dimethyltetradeca-2,4,10,12-tetraen-1-ylidene]-5-[(4-hydroxyphenyl)methyl]pyrrolidine-2,4-dione + reduced [NADPH--hemoprotein reductase] + O2 = 3-[(2E,4E,8S,10E,12Z)-4,8-dimethyltetradeca-2,4,10,12-tetraenoyl]-4-hydroxy-5-(4-hydroxyphenyl)-1,2-dihydropyridin-2-one + oxidized [NADPH--hemoprotein reductase] + 2 H2O. Its pathway is mycotoxin biosynthesis. Functionally, cytochrome P450 monooxygenase; part of the gene cluster that mediates the biosynthesis of ilicicolin H, a 4-hydroxy-2-pyridonealkaloid that has potent and broad antifungal activities by inhibiting the mitochondrial respiration chain. IliC catalyzes the ring expansion of the tetramate intermediate to the acyclic 2-pyridone intermediate that contains the trans bis-diene chain. The biosynthesis of ilicicolin H starts with formation of the tetramic acid by the hybrid PKS-NRPS synthetase iliA with the partnering trans-enoyl reductase iliB since iliA lacks a designated enoylreductase (ER) domain. The cytochrome P450 monooxygenase iliC then catalyzes the ring expansion of the tetramate to the acyclic 2-pyridone. The pericyclase iliD further converts the acyclic 2-pyridone into 8-epi-ilicicolin H. 8-epi-ilicicolin H might then spontaneously convert to ilicicolin H since ilicicolin H is produced in the absence of the epimerase iliE, in contrast to what was observed for the Talaromyces variabilis ilicolin H biosynthetic pathway. In Neonectria sp. (strain DH2), this protein is Cytochrome P450 monooxygenase iliC.